An 850-amino-acid chain; its full sequence is MASKRKASAMATEPEEPVDPADELMFLNLGGGNEVGRSCHIIQYKGKTVMLDAGQHPAYDGLAALPFFDDFDLSTVDVLLISHFHIDHAASLPYVLAKTNFRGRVFMTHATKAIYKWLIQDSVRVGNTSSNPQSSLVYTEEDHLKTFPMIEAIDYNTTHTISSIRITPYPAGHVLGAAMFLIEIAGLKIFFTGDYSREEDRHLISAKVPKGVKIDVLITESTYGIASHIPRPEREQALMKSITGILNRGGRVLMPVFALGRAQELLLILDEYWGKHAEYQKYPIYYASNLARKCMLVYQTYVGSMNDNIKRLFRERLAESESSGDGAGKGGPWDFRFIRSLKSLDRFEDVGGCVMLASPGMLQNGVSRELLERWAPSEKNGVIITGYSVEGTMAKQLLQEPEQIQAVMSRNIAGARRGPGGDAEKVMIPRRCTVQEFSFAAHVDGVENREFIEEVAAPVVILVHGEVHNMMRLKSKLLSLNATKEHKVKVFSPRNCEELRIPFKTDKVAKVVGKLASIPPSLKEAKTGHDGPLPSSTEPQLITGVLVQNDFKMSLMAPEDLREYAGLTTTTIACKQRLKLSAAGIDLIKWGLEGTFGAVEELPEVKPKLEIVKSENGDTKMEEADEELPHGDDVVAAYLVMGCVTVRYRASGEVELEWEGNMLNDGIADAVMAVLLGIESSPAAVKRSATKNPHTHSPLPADKNPHSHLTPEDRFFRLCMFLEAQFGQDNVSPIVEPKLPPLSPTTKAITSPSEETAKSSDVKSDADADASMDVSEEDEDEQQLKARERAEVERLERMGIPKPGVRIKVDKMEAKVWLEDLEVECANKIFRERVRAVVERAVEVVAPLWG.

Zn(2+) is bound by residues histidine 83, histidine 85, aspartate 87, histidine 88, histidine 173, and aspartate 194. Residue histidine 442 is the Proton donor of the active site. Position 464 (histidine 464) interacts with Zn(2+). Disordered regions lie at residues 685–708 (VKRS…PHSH) and 732–784 (SPIV…EQQL). A compositionally biased stretch (polar residues) spans 744–754 (PTTKAITSPSE). A compositionally biased stretch (basic and acidic residues) spans 755-766 (ETAKSSDVKSDA). Residues 767–781 (DADASMDVSEEDEDE) show a composition bias toward acidic residues.

This sequence belongs to the metallo-beta-lactamase superfamily. RNA-metabolizing metallo-beta-lactamase-like family. CPSF2/YSH1 subfamily.

It localises to the nucleus. Component of the cleavage factor I (CF I) involved in pre-mRNA 3'-end processing. The protein is Endoribonuclease ysh-1 (ysh-1) of Neurospora crassa (strain ATCC 24698 / 74-OR23-1A / CBS 708.71 / DSM 1257 / FGSC 987).